Here is a 559-residue protein sequence, read N- to C-terminus: Small ribosomal subunit protein bS1 (559 aa).

S1 motif domains lie at 21–87 (GSII…LSRE), 105–171 (SETV…VSRR), 192–260 (GIEI…LGLK), 277–347 (GIKL…LGLK), 364–434 (GIHV…LGIK), and 451–520 (GAII…LTFH).

This sequence belongs to the bacterial ribosomal protein bS1 family.

Binds mRNA; thus facilitating recognition of the initiation point. It is needed to translate mRNA with a short Shine-Dalgarno (SD) purine-rich sequence. The sequence is that of Small ribosomal subunit protein bS1 (rpsA) from Buchnera aphidicola subsp. Schizaphis graminum (strain Sg).